The primary structure comprises 108 residues: Nucleoid-associated protein PSPTO_3645 (108 aa).

Residues 85-96 (QASQDKTASMTA) show a composition bias toward polar residues. The tract at residues 85–108 (QASQDKTASMTAGMQLPPGMKLPF) is disordered.

This sequence belongs to the YbaB/EbfC family. In terms of assembly, homodimer.

The protein resides in the cytoplasm. It localises to the nucleoid. Binds to DNA and alters its conformation. May be involved in regulation of gene expression, nucleoid organization and DNA protection. In Pseudomonas syringae pv. tomato (strain ATCC BAA-871 / DC3000), this protein is Nucleoid-associated protein PSPTO_3645.